The following is a 1807-amino-acid chain: Phospholipase D (1807 aa).

A disordered region spans residues 1-28 (MPGPDDDVREPTAAARTNNSGYGLRAAP). Transmembrane regions (helical) follow at residues 257 to 277 (IAFV…IVTS), 305 to 325 (AGVF…VFVY), and 587 to 607 (VYYI…GFLA). Positions 697 to 734 (TASRMGTGNLAPASSRVDSSTQSEDSFEAPKPPPSSVS) are disordered. PLD phosphodiesterase domains follow at residues 853 to 880 (GFWS…CFGR) and 1249 to 1276 (EQIY…NDRS). Catalysis depends on residues histidine 858, lysine 860, aspartate 865, histidine 1254, lysine 1256, and aspartate 1261. Polar residues-rich tracts occupy residues 1531-1547 (FSRS…SQLD), 1568-1578 (YNSNSMPSNAS), and 1597-1614 (YPNS…QSPA). The segment at 1531–1621 (FSRSNSVSTP…SPAIATGARS (91 aa)) is disordered.

It belongs to the phospholipase D family. TM-PLD subfamily.

It localises to the membrane. It catalyses the reaction a 1,2-diacyl-sn-glycero-3-phosphocholine + H2O = a 1,2-diacyl-sn-glycero-3-phosphate + choline + H(+). In terms of biological role, hydrolyzes glycerol-phospholipids at the terminal phosphodiesteric bond. This Phytophthora infestans (Potato late blight agent) protein is Phospholipase D.